The primary structure comprises 92 residues: ATP synthase subunit c (92 aa).

A run of 2 helical transmembrane segments spans residues 20-40 and 71-91; these read GAGL…GTGL and MAIS…LVFV.

The protein belongs to the ATPase C chain family. In terms of assembly, F-type ATPases have 2 components, F(1) - the catalytic core - and F(0) - the membrane proton channel. F(1) has five subunits: alpha(3), beta(3), gamma(1), delta(1), epsilon(1). F(0) has three main subunits: a(1), b(2) and c(10-14). The alpha and beta chains form an alternating ring which encloses part of the gamma chain. F(1) is attached to F(0) by a central stalk formed by the gamma and epsilon chains, while a peripheral stalk is formed by the delta and b chains.

It localises to the cell membrane. Functionally, f(1)F(0) ATP synthase produces ATP from ADP in the presence of a proton or sodium gradient. F-type ATPases consist of two structural domains, F(1) containing the extramembraneous catalytic core and F(0) containing the membrane proton channel, linked together by a central stalk and a peripheral stalk. During catalysis, ATP synthesis in the catalytic domain of F(1) is coupled via a rotary mechanism of the central stalk subunits to proton translocation. In terms of biological role, key component of the F(0) channel; it plays a direct role in translocation across the membrane. A homomeric c-ring of between 10-14 subunits forms the central stalk rotor element with the F(1) delta and epsilon subunits. This chain is ATP synthase subunit c, found in Mycoplasmopsis pulmonis (strain UAB CTIP) (Mycoplasma pulmonis).